We begin with the raw amino-acid sequence, 290 residues long: Probable septum site-determining protein MinC (290 aa).

It belongs to the MinC family. Interacts with MinD and FtsZ.

In terms of biological role, cell division inhibitor that blocks the formation of polar Z ring septums. Rapidly oscillates between the poles of the cell to destabilize FtsZ filaments that have formed before they mature into polar Z rings. Prevents FtsZ polymerization. In Heliobacterium modesticaldum (strain ATCC 51547 / Ice1), this protein is Probable septum site-determining protein MinC.